The sequence spans 241 residues: Cytochrome b6-f complex iron-sulfur subunit 2, cyanelle (241 aa).

The N-terminal 62 residues, 1 to 62, are a transit peptide targeting the cyanelle; sequence MSAFACSAVA…AAKATTFSIS (62 aa). Residues 83 to 103 form a helical membrane-spanning segment; it reads LLGAIAGPTIGAGGPFVSFLV. Residues 127–223 form the Rieske domain; it reads VEKWLETXKP…VNVLEDGVVA (97 aa). The [2Fe-2S] cluster site is built by cysteine 169, histidine 171, cysteine 187, and histidine 190. A disulfide bond links cysteine 174 and cysteine 189.

It belongs to the Rieske iron-sulfur protein family. The 4 large subunits of the cytochrome b6-f complex are cytochrome b6, subunit IV (17 kDa polypeptide, petD), cytochrome f and the Rieske protein, while the 4 small subunits are petG, petL, petM and petN. The complex functions as a dimer. Requires [2Fe-2S] cluster as cofactor.

The protein localises to the plastid. It localises to the cyanelle thylakoid membrane. The enzyme catalyses 2 oxidized [plastocyanin] + a plastoquinol + 2 H(+)(in) = 2 reduced [plastocyanin] + a plastoquinone + 4 H(+)(out). Functionally, component of the cytochrome b6-f complex, which mediates electron transfer between photosystem II (PSII) and photosystem I (PSI), cyclic electron flow around PSI, and state transitions. This chain is Cytochrome b6-f complex iron-sulfur subunit 2, cyanelle (petC-2), found in Cyanophora paradoxa.